Here is a 248-residue protein sequence, read N- to C-terminus: 3-deoxy-manno-octulosonate cytidylyltransferase (248 aa).

Belongs to the KdsB family.

It is found in the cytoplasm. The enzyme catalyses 3-deoxy-alpha-D-manno-oct-2-ulosonate + CTP = CMP-3-deoxy-beta-D-manno-octulosonate + diphosphate. The protein operates within nucleotide-sugar biosynthesis; CMP-3-deoxy-D-manno-octulosonate biosynthesis; CMP-3-deoxy-D-manno-octulosonate from 3-deoxy-D-manno-octulosonate and CTP: step 1/1. It functions in the pathway bacterial outer membrane biogenesis; lipopolysaccharide biosynthesis. Its function is as follows. Activates KDO (a required 8-carbon sugar) for incorporation into bacterial lipopolysaccharide in Gram-negative bacteria. This Christiangramia forsetii (strain DSM 17595 / CGMCC 1.15422 / KT0803) (Gramella forsetii) protein is 3-deoxy-manno-octulosonate cytidylyltransferase.